A 1008-amino-acid chain; its full sequence is Collagen, type I, alpha 1a (1008 aa).

Over residues 1 to 21 (SPAMPVPGPMGPMGPRGPPGS) the composition is skewed to pro residues. The tract at residues 1 to 920 (SPAMPVPGPM…PQEKAPDPFR (920 aa)) is disordered. The segment covering 39–53 (NGEDGESGKPGRGGE) has biased composition (basic and acidic residues). The segment covering 92 to 117 (TPGAMGPRGAAGAAGARGNDGAAGAA) has biased composition (low complexity). Over residues 119–132 (PPGPTGPAGPPGFP) the composition is skewed to pro residues. The segment covering 133–151 (GGPGAKGDAGAQGGRGPEG) has biased composition (gly residues). Low complexity-rich tracts occupy residues 152 to 195 (PAGA…AGAP) and 204 to 230 (SGPQ…APGV). The span at 253–265 (GARGGPGGRGFPG) shows a compositional bias: gly residues. Composition is skewed to low complexity over residues 339 to 354 (VGAR…PGPK) and 410 to 422 (LPGE…PAGA). The segment covering 423-435 (RGDRGFPGERGAK) has biased composition (basic and acidic residues). Composition is skewed to low complexity over residues 437 to 456 (DAGA…QGMP), 489 to 524 (RGLT…ARGA), and 537 to 573 (AGFA…AGPT). A compositionally biased stretch (pro residues) spans 604–617 (PPGPSGNPGPPGPA). Residues 634–661 (PAGRPGELGAAGPPGPAGEKGSPGSEGA) show a composition bias toward low complexity. The span at 696-709 (GEAGGPSGPGGERG) shows a compositional bias: gly residues. Residues 717–735 (PGLAGAPGEPGREGSPGNE) show a composition bias toward low complexity. Positions 761–771 (APGPPGAPGPV) are enriched in pro residues. The span at 785 to 806 (PAGPAGSAGPSGPRGPAGAPGL) shows a compositional bias: low complexity. A compositionally biased stretch (basic and acidic residues) spans 807–821 (RGDKGESGEAGERRG). Residues 832–868 (SGSSGEQGPAGAAGPAGPRGPAGSAGSPGKDGMSGLP) show a composition bias toward low complexity. Positions 884–896 (AGPPGPPGPPGAP) are enriched in pro residues. Residues 978–1008 (TSRLPLLDLAPMDVGAPDQEFGLEVGPVCFL) form the Fibrillar collagen NC1 domain.

This sequence belongs to the fibrillar collagen family.

Its subcellular location is the secreted. The protein resides in the extracellular space. The protein localises to the extracellular matrix. The sequence is that of Collagen, type I, alpha 1a from Epinephelus aeneus (White grouper).